The sequence spans 142 residues: DNA-directed RNA polymerase subunit omega (142 aa).

The segment at 93–142 (AWSVPEAGGDEGGDASELLDDEGEGAAAGAEPDFSEMDVPLADLADEDKI) is disordered. Residues 100–116 (GGDEGGDASELLDDEGE) are compositionally biased toward acidic residues.

The protein belongs to the RNA polymerase subunit omega family. As to quaternary structure, the RNAP catalytic core consists of 2 alpha, 1 beta, 1 beta' and 1 omega subunit. When a sigma factor is associated with the core the holoenzyme is formed, which can initiate transcription.

It carries out the reaction RNA(n) + a ribonucleoside 5'-triphosphate = RNA(n+1) + diphosphate. Functionally, promotes RNA polymerase assembly. Latches the N- and C-terminal regions of the beta' subunit thereby facilitating its interaction with the beta and alpha subunits. This is DNA-directed RNA polymerase subunit omega from Rhodospirillum centenum (strain ATCC 51521 / SW).